A 566-amino-acid chain; its full sequence is Oxygen-dependent choline dehydrogenase (566 aa).

7-36 (DYIICGAGSAGNVLATRLTEDPNVTVLLLE) provides a ligand contact to FAD. The disordered stretch occupies residues 183–203 (QQEGFGPMDRTVTPKGRRAST). Residue His-474 is the Proton acceptor of the active site.

This sequence belongs to the GMC oxidoreductase family. Requires FAD as cofactor.

It carries out the reaction choline + A = betaine aldehyde + AH2. The enzyme catalyses betaine aldehyde + NAD(+) + H2O = glycine betaine + NADH + 2 H(+). It participates in amine and polyamine biosynthesis; betaine biosynthesis via choline pathway; betaine aldehyde from choline (cytochrome c reductase route): step 1/1. Involved in the biosynthesis of the osmoprotectant glycine betaine. Catalyzes the oxidation of choline to betaine aldehyde and betaine aldehyde to glycine betaine at the same rate. The sequence is that of Oxygen-dependent choline dehydrogenase from Burkholderia ambifaria (strain ATCC BAA-244 / DSM 16087 / CCUG 44356 / LMG 19182 / AMMD) (Burkholderia cepacia (strain AMMD)).